A 278-amino-acid chain; its full sequence is Large ribosomal subunit protein uL2 (278 aa).

2 disordered regions span residues 27-57 (STPE…QGGG) and 224-278 (VAMN…NKKR). The segment covering 258-278 (RSPKKASSKYIVRRRKTNKKR) has biased composition (basic residues).

This sequence belongs to the universal ribosomal protein uL2 family. Part of the 50S ribosomal subunit. Forms a bridge to the 30S subunit in the 70S ribosome.

Functionally, one of the primary rRNA binding proteins. Required for association of the 30S and 50S subunits to form the 70S ribosome, for tRNA binding and peptide bond formation. It has been suggested to have peptidyltransferase activity; this is somewhat controversial. Makes several contacts with the 16S rRNA in the 70S ribosome. The polypeptide is Large ribosomal subunit protein uL2 (Streptomyces avermitilis (strain ATCC 31267 / DSM 46492 / JCM 5070 / NBRC 14893 / NCIMB 12804 / NRRL 8165 / MA-4680)).